The following is a 269-amino-acid chain: Triosephosphate isomerase (269 aa).

Residue 8–10 participates in substrate binding; that stretch reads NWK. H105 serves as the catalytic Electrophile. E183 (proton acceptor) is an active-site residue. Residues G189, S227, and 248-249 each bind substrate; that span reads GG.

This sequence belongs to the triosephosphate isomerase family. In terms of assembly, homodimer.

It is found in the cytoplasm. It carries out the reaction D-glyceraldehyde 3-phosphate = dihydroxyacetone phosphate. Its pathway is carbohydrate biosynthesis; gluconeogenesis. The protein operates within carbohydrate degradation; glycolysis; D-glyceraldehyde 3-phosphate from glycerone phosphate: step 1/1. Functionally, involved in the gluconeogenesis. Catalyzes stereospecifically the conversion of dihydroxyacetone phosphate (DHAP) to D-glyceraldehyde-3-phosphate (G3P). In Psychrobacter cryohalolentis (strain ATCC BAA-1226 / DSM 17306 / VKM B-2378 / K5), this protein is Triosephosphate isomerase.